Reading from the N-terminus, the 424-residue chain is GTPase Obg (424 aa).

One can recognise an Obg domain in the interval 1-158 (MFVDKARIFV…RWISLELKLL (158 aa)). In terms of domain architecture, OBG-type G spans 159–331 (ADVGLIGFPN…LLKECARVLS (173 aa)). GTP contacts are provided by residues 165–172 (GFPNVGKS), 190–194 (FTTIT), 212–215 (DIPG), 282–285 (NKAD), and 312–314 (SAA). Mg(2+)-binding residues include S172 and T192. The 80-residue stretch at 345–424 (RFVPEDKHFT…LNDFEFEFLK (80 aa)) folds into the OCT domain.

It belongs to the TRAFAC class OBG-HflX-like GTPase superfamily. OBG GTPase family. As to quaternary structure, monomer. Requires Mg(2+) as cofactor.

It localises to the cytoplasm. Its function is as follows. An essential GTPase which binds GTP, GDP and possibly (p)ppGpp with moderate affinity, with high nucleotide exchange rates and a fairly low GTP hydrolysis rate. Plays a role in control of the cell cycle, stress response, ribosome biogenesis and in those bacteria that undergo differentiation, in morphogenesis control. In Clostridium acetobutylicum (strain ATCC 824 / DSM 792 / JCM 1419 / IAM 19013 / LMG 5710 / NBRC 13948 / NRRL B-527 / VKM B-1787 / 2291 / W), this protein is GTPase Obg.